Consider the following 105-residue polypeptide: Phosphoribosyl-ATP pyrophosphatase (105 aa).

Belongs to the PRA-PH family.

The protein localises to the cytoplasm. It carries out the reaction 1-(5-phospho-beta-D-ribosyl)-ATP + H2O = 1-(5-phospho-beta-D-ribosyl)-5'-AMP + diphosphate + H(+). Its pathway is amino-acid biosynthesis; L-histidine biosynthesis; L-histidine from 5-phospho-alpha-D-ribose 1-diphosphate: step 2/9. The chain is Phosphoribosyl-ATP pyrophosphatase from Ruegeria pomeroyi (strain ATCC 700808 / DSM 15171 / DSS-3) (Silicibacter pomeroyi).